Here is a 251-residue protein sequence, read N- to C-terminus: Triosephosphate isomerase (251 aa).

N8–K10 contacts substrate. The active-site Electrophile is the H97. E170 functions as the Proton acceptor in the catalytic mechanism. Residues G176, S215, and G236 to G237 contribute to the substrate site.

It belongs to the triosephosphate isomerase family. In terms of assembly, homodimer.

It localises to the cytoplasm. It catalyses the reaction D-glyceraldehyde 3-phosphate = dihydroxyacetone phosphate. It functions in the pathway carbohydrate biosynthesis; gluconeogenesis. It participates in carbohydrate degradation; glycolysis; D-glyceraldehyde 3-phosphate from glycerone phosphate: step 1/1. Functionally, involved in the gluconeogenesis. Catalyzes stereospecifically the conversion of dihydroxyacetone phosphate (DHAP) to D-glyceraldehyde-3-phosphate (G3P). The polypeptide is Triosephosphate isomerase (Nitratidesulfovibrio vulgaris (strain DSM 19637 / Miyazaki F) (Desulfovibrio vulgaris)).